A 188-amino-acid polypeptide reads, in one-letter code: Threonylcarbamoyl-AMP synthase (188 aa).

The region spanning 3-188 (QLHPSEIKDL…RSGKILRNGQ (186 aa)) is the YrdC-like domain.

Belongs to the SUA5 family. TsaC subfamily.

It is found in the cytoplasm. The catalysed reaction is L-threonine + hydrogencarbonate + ATP = L-threonylcarbamoyladenylate + diphosphate + H2O. Functionally, required for the formation of a threonylcarbamoyl group on adenosine at position 37 (t(6)A37) in tRNAs that read codons beginning with adenine. Catalyzes the conversion of L-threonine, HCO(3)(-)/CO(2) and ATP to give threonylcarbamoyl-AMP (TC-AMP) as the acyladenylate intermediate, with the release of diphosphate. The chain is Threonylcarbamoyl-AMP synthase from Shewanella sp. (strain ANA-3).